The primary structure comprises 40 residues: uncharacterized protein (40 aa).

This is an uncharacterized protein from Streptomyces peucetius.